A 426-amino-acid polypeptide reads, in one-letter code: NADH-quinone oxidoreductase subunit D 1 (426 aa).

The interval 1-51 is disordered; the sequence is MATEFTVPDSAARIATAQQAGGGTPVRSGPPDEGGEFSGDRMSLSMGPSHP.

Belongs to the complex I 49 kDa subunit family. In terms of assembly, NDH-1 is composed of 14 different subunits. Subunits NuoB, C, D, E, F, and G constitute the peripheral sector of the complex.

Its subcellular location is the cell inner membrane. It catalyses the reaction a quinone + NADH + 5 H(+)(in) = a quinol + NAD(+) + 4 H(+)(out). In terms of biological role, NDH-1 shuttles electrons from NADH, via FMN and iron-sulfur (Fe-S) centers, to quinones in the respiratory chain. The immediate electron acceptor for the enzyme in this species is believed to be ubiquinone. Couples the redox reaction to proton translocation (for every two electrons transferred, four hydrogen ions are translocated across the cytoplasmic membrane), and thus conserves the redox energy in a proton gradient. This is NADH-quinone oxidoreductase subunit D 1 from Opitutus terrae (strain DSM 11246 / JCM 15787 / PB90-1).